Consider the following 404-residue polypeptide: Argininosuccinate synthase (404 aa).

ATP contacts are provided by residues 11–19 (AYSGGLDTS) and alanine 38. Positions 91 and 96 each coordinate L-citrulline. Position 121 (glycine 121) interacts with ATP. Residues threonine 123, asparagine 127, and aspartate 128 each contribute to the L-aspartate site. Asparagine 127 provides a ligand contact to L-citrulline. Residues arginine 131, serine 182, serine 191, glutamate 267, and tyrosine 279 each coordinate L-citrulline.

The protein belongs to the argininosuccinate synthase family. Type 1 subfamily. In terms of assembly, homotetramer.

The protein localises to the cytoplasm. The catalysed reaction is L-citrulline + L-aspartate + ATP = 2-(N(omega)-L-arginino)succinate + AMP + diphosphate + H(+). The protein operates within amino-acid biosynthesis; L-arginine biosynthesis; L-arginine from L-ornithine and carbamoyl phosphate: step 2/3. This is Argininosuccinate synthase from Paramagnetospirillum magneticum (strain ATCC 700264 / AMB-1) (Magnetospirillum magneticum).